The primary structure comprises 319 residues: Putrescine hydroxycinnamoyltransferase 2 (319 aa).

Residues His-160 and Asp-301 each act as proton acceptor in the active site.

This sequence belongs to the plant acyltransferase family.

Its function is as follows. Hydroxycinnamoyl transferase that catalyzes the transfer of an acyl from p-coumaryol-CoA to putrescine, to produce coumaroyl putrescine. In Oryza sativa subsp. japonica (Rice), this protein is Putrescine hydroxycinnamoyltransferase 2.